The sequence spans 66 residues: Alpha-like toxin BmK-M7 (66 aa).

Positions R2–H64 constitute an LCN-type CS-alpha/beta domain. Disulfide bonds link C12/C63, C16/C36, C22/C46, and C26/C48.

It belongs to the long (4 C-C) scorpion toxin superfamily. Sodium channel inhibitor family. Alpha subfamily. As to expression, expressed by the venom gland.

It is found in the secreted. In terms of biological role, alpha toxins bind voltage-independently at site-3 of sodium channels (Nav) and inhibit the inactivation of the activated channels, thereby blocking neuronal transmission. This toxin is active on both mammals and insects. It can be considered as a cardiotoxin, as it can bind to human cardiac sodium channel and modify its normal properties. This chain is Alpha-like toxin BmK-M7, found in Olivierus martensii (Manchurian scorpion).